The sequence spans 274 residues: Probable endonuclease LCL3 (274 aa).

The chain crosses the membrane as a helical span at residues 15–32 (AVLSIILTGSTLTLIYTY). The TNase-like domain occupies 53–261 (HWLYGKVTSV…RSRKKGLWIQ (209 aa)). Arg-151 is a catalytic residue. Ca(2+) is bound at residue Asp-156. Active-site residues include Glu-159 and Arg-199.

It belongs to the LCL3 family.

The protein localises to the mitochondrion. Its subcellular location is the membrane. The sequence is that of Probable endonuclease LCL3 (LCL3) from Saccharomyces cerevisiae (strain Lalvin EC1118 / Prise de mousse) (Baker's yeast).